Consider the following 327-residue polypeptide: Malate dehydrogenase (327 aa).

NAD(+)-binding positions include 20 to 25 and aspartate 44; that span reads GAGRVG. 2 residues coordinate substrate: arginine 93 and arginine 99. Residues asparagine 106 and 129–131 each bind NAD(+); that span reads VTN. Substrate is bound by residues asparagine 131 and arginine 162. The active-site Proton acceptor is histidine 186.

It belongs to the LDH/MDH superfamily. MDH type 3 family.

The enzyme catalyses (S)-malate + NAD(+) = oxaloacetate + NADH + H(+). Functionally, catalyzes the reversible oxidation of malate to oxaloacetate. This Nostoc punctiforme (strain ATCC 29133 / PCC 73102) protein is Malate dehydrogenase.